A 63-amino-acid chain; its full sequence is Large ribosomal subunit protein uL30 (63 aa).

This sequence belongs to the universal ribosomal protein uL30 family. As to quaternary structure, part of the 50S ribosomal subunit.

In Xylella fastidiosa (strain M23), this protein is Large ribosomal subunit protein uL30.